The primary structure comprises 50 residues: Sperm protamine P1 (50 aa).

The protein belongs to the protamine P1 family. In terms of tissue distribution, testis.

It is found in the nucleus. It localises to the chromosome. Protamines substitute for histones in the chromatin of sperm during the haploid phase of spermatogenesis. They compact sperm DNA into a highly condensed, stable and inactive complex. The chain is Sperm protamine P1 (PRM1) from Trachypithecus phayrei (Phayre's leaf monkey).